Here is a 36-residue protein sequence, read N- to C-terminus: Toxin Bcg III 29.21 (36 aa).

An intrachain disulfide couples Cys6 to Cys31.

It localises to the secreted. It is found in the nematocyst. This Bunodosoma cangicum (Sea anemone) protein is Toxin Bcg III 29.21.